A 441-amino-acid polypeptide reads, in one-letter code: Ribosomal protein uS12 methylthiotransferase RimO (441 aa).

One can recognise an MTTase N-terminal domain in the interval 7–117 (PKISFVSLGC…VLDAVHRAKP (111 aa)). C16, C52, C81, C148, C152, and C155 together coordinate [4Fe-4S] cluster. One can recognise a Radical SAM core domain in the interval 134–371 (LTPRHYAYLK…MARQQAISAR (238 aa)). The 67-residue stretch at 374-440 (KRKVGTRQQI…AYDLHGTVAG (67 aa)) folds into the TRAM domain.

The protein belongs to the methylthiotransferase family. RimO subfamily. Requires [4Fe-4S] cluster as cofactor.

The protein localises to the cytoplasm. The catalysed reaction is L-aspartate(89)-[ribosomal protein uS12]-hydrogen + (sulfur carrier)-SH + AH2 + 2 S-adenosyl-L-methionine = 3-methylsulfanyl-L-aspartate(89)-[ribosomal protein uS12]-hydrogen + (sulfur carrier)-H + 5'-deoxyadenosine + L-methionine + A + S-adenosyl-L-homocysteine + 2 H(+). Catalyzes the methylthiolation of an aspartic acid residue of ribosomal protein uS12. The sequence is that of Ribosomal protein uS12 methylthiotransferase RimO from Rhodopseudomonas palustris (strain HaA2).